Reading from the N-terminus, the 166-residue chain is Endoribonuclease YbeY (166 aa).

Zn(2+) is bound by residues His-111, His-115, and His-121. The interval 141 to 166 is disordered; it reads LGYPDPYADDESADHPHSDTPSKDHE. The span at 153–166 shows a compositional bias: basic and acidic residues; it reads ADHPHSDTPSKDHE.

It belongs to the endoribonuclease YbeY family. Requires Zn(2+) as cofactor.

The protein resides in the cytoplasm. In terms of biological role, single strand-specific metallo-endoribonuclease involved in late-stage 70S ribosome quality control and in maturation of the 3' terminus of the 16S rRNA. The sequence is that of Endoribonuclease YbeY from Pseudomonas syringae pv. tomato (strain ATCC BAA-871 / DC3000).